The primary structure comprises 75 residues: Conotoxin ar11a (75 aa).

The N-terminal stretch at 1-19 is a signal peptide; it reads MKLCATFLLVLVTLPLVTG. Positions 20-36 are excised as a propeptide; sequence EKSSERSLSGAILRGVR. 4 disulfide bridges follow: Cys-39-Cys-53, Cys-46-Cys-58, Cys-52-Cys-63, and Cys-57-Cys-70.

As to expression, expressed by the venom duct.

It localises to the secreted. In terms of biological role, both natural (L-Leu form) and synthetic (D-Leu from) peptides equally cause sensitivity to touch and body tremor. Neither L-Leu form nor D-Leu form is active on nerve-muscle preparation. This Conus arenatus (Sand-dusted cone) protein is Conotoxin ar11a.